The chain runs to 1372 residues: Insulin receptor (1372 aa).

The first 27 residues, 1-27, serve as a signal peptide directing secretion; it reads MGFGRGCETTAVPLLVAVAALLVGTAG. Extracellular segments lie at residues 28 to 748 and 753 to 946; these read HLYP…PRPS and SLEE…NIAK. A disulfide bond links cysteine 35 and cysteine 53. Residues asparagine 43, asparagine 52, asparagine 105, and asparagine 138 are each glycosylated (N-linked (GlcNAc...) asparagine). 9 disulfides stabilise this stretch: cysteine 153–cysteine 182, cysteine 186–cysteine 209, cysteine 196–cysteine 215, cysteine 219–cysteine 228, cysteine 223–cysteine 234, cysteine 235–cysteine 243, cysteine 239–cysteine 252, cysteine 255–cysteine 264, and cysteine 268–cysteine 280. The N-linked (GlcNAc...) asparagine glycan is linked to asparagine 242. N-linked (GlcNAc...) asparagine glycosylation is present at asparagine 282. Intrachain disulfides connect cysteine 286/cysteine 311, cysteine 293/cysteine 301, cysteine 315/cysteine 328, cysteine 331/cysteine 335, and cysteine 339/cysteine 360. N-linked (GlcNAc...) asparagine glycosylation is present at asparagine 322. N-linked (GlcNAc...) asparagine glycosylation is present at asparagine 364. Serine 400 carries the post-translational modification Phosphoserine. Position 401 is a phosphotyrosine (tyrosine 401). Phosphoserine is present on serine 407. Residues asparagine 424 and asparagine 445 are each glycosylated (N-linked (GlcNAc...) asparagine). Cysteine 462 and cysteine 495 are oxidised to a cystine. Residues asparagine 541, asparagine 635, asparagine 653, and asparagine 700 are each glycosylated (N-linked (GlcNAc...) asparagine). In terms of domain architecture, Fibronectin type-III 1 spans 626 to 728; it reads VPLDPISVSN…SQILKELEES (103 aa). Cystine bridges form between cysteine 676/cysteine 889 and cysteine 815/cysteine 824. Positions 688 to 709 are disordered; sequence SPPFESDDSQKHNQSEYDDSAS. Residues 735 to 743 are insulin-binding; the sequence is EDYLHNVVF. 2 Fibronectin type-III domains span residues 744-838 and 843-937; these read VPRP…MPEA and IVGP…VTDY. Residues asparagine 759 and asparagine 772 are each glycosylated (N-linked (GlcNAc...) asparagine). N-linked (GlcNAc...) asparagine glycosylation is found at asparagine 910 and asparagine 923. A helical membrane pass occupies residues 947 to 967; it reads IIIGPLIFVFLFSVVIGSIYL. At 968-1372 the chain is on the cytoplasmic side; the sequence is FLRKRQPDGP…VLTLPRSNPS (405 aa). Residues 986 to 989 form an important for interaction with IRS1, SHC1 and STAT5B region; it reads NPEY. Tyrosine 989 is subject to Phosphotyrosine; by autocatalysis. One can recognise a Protein kinase domain in the interval 1013-1288; sequence ITLLRELGQG…LLKDDLHPSF (276 aa). Serine 1023 and lysine 1047 together coordinate ATP. Lysine 1069 is covalently cross-linked (Glycyl lysine isopeptide (Lys-Gly) (interchain with G-Cter in ubiquitin)). At cysteine 1073 the chain carries S-nitrosocysteine. 1094-1100 provides a ligand contact to ATP; the sequence is ELMAHGD. Residue aspartate 1149 is the Proton donor/acceptor of the active site. ATP-binding positions include 1153-1154 and aspartate 1167; that span reads RN. 5 positions are modified to phosphotyrosine; by autocatalysis: tyrosine 1175, tyrosine 1179, tyrosine 1180, tyrosine 1345, and tyrosine 1351. Positions 1349-1372 are disordered; sequence IPYTHMNGGKKNGRVLTLPRSNPS. The segment at 1351–1354 is PIK3R1 binding; that stretch reads YTHM.

The protein belongs to the protein kinase superfamily. Tyr protein kinase family. Insulin receptor subfamily. Tetramer of 2 alpha and 2 beta chains linked by disulfide bonds. The alpha chains carry the insulin-binding regions, while the beta chains carry the kinase domain. Forms a hybrid receptor with IGF1R, the hybrid is a tetramer consisting of 1 alpha chain and 1 beta chain of INSR and 1 alpha chain and 1 beta chain of IGF1R. Interacts with SORBS1 but dissociates from it following insulin stimulation. Binds SH2B2. Activated form of INSR interacts (via Tyr-989) with the PTB/PID domains of IRS1 and SHC1. The sequences surrounding the phosphorylated NPXY motif contribute differentially to either IRS1 or SHC1 recognition. Interacts (via tyrosines in the C-terminus) with IRS2 (via PTB domain and 591-786 AA); the 591-786 would be the primary anchor of IRS2 to INSR while the PTB domain would have a stabilizing action on the interaction with INSR. Interacts with the SH2 domains of the 85 kDa regulatory subunit of PI3K (PIK3R1) in vitro, when autophosphorylated on tyrosine residues. Interacts with SOCS7. Interacts (via the phosphorylated Tyr-989), with SOCS3. Interacts (via the phosphorylated Tyr-1175, Tyr-1179, Tyr-1180) with SOCS1. Interacts with CAV2 (tyrosine-phosphorylated form); the interaction is increased with 'Tyr-27'phosphorylation of CAV2. Interacts with ARRB2. Interacts with GRB10; this interaction blocks the association between IRS1/IRS2 and INSR, significantly reduces insulin-stimulated tyrosine phosphorylation of IRS1 and IRS2 and thus decreases insulin signaling. Interacts with GRB7. Interacts with PDPK1. Interacts (via Tyr-1180) with GRB14 (via BPS domain); this interaction protects the tyrosines in the activation loop from dephosphorylation, but promotes dephosphorylation of Tyr-989, this results in decreased interaction with, and phosphorylation of, IRS1. Interacts (via subunit alpha) with ENPP1 (via 485-599 AA); this interaction blocks autophosphorylation. Interacts with PTPRE; this interaction is dependent of Tyr-1175, Tyr-1179 and Tyr-1180 of the INSR. Interacts with STAT5B (via SH2 domain). Interacts with PTPRF. Interacts with the insulin receptor SORL1; this interaction strongly increases its surface exposure, hence strengthens insulin signal reception. Interacts (tyrosine phosphorylated) with CCDC88A/GIV (via SH2-like region); binding requires autophosphorylation of the INSR C-terminal region. Interacts with GNAI3; the interaction is probably mediated by CCDC88A/GIV. Interacts with LMBRD1. Interacts (in response to insulin stimulation) with NCK1; this interaction may recruit PTPN1 to mediate INSR dephosphorylation. Interacts with CD248; this interaction diminishes INSR autophosphorylation. In terms of processing, after being transported from the endoplasmic reticulum to the Golgi apparatus, the single glycosylated precursor is further glycosylated and then cleaved, followed by its transport to the plasma membrane. Post-translationally, autophosphorylated on tyrosine residues in response to insulin. Phosphorylation of Tyr-989 is required for IRS1-, SHC1-, and STAT5B-binding. Dephosphorylated by PTPRE on Tyr-989, Tyr-1175, Tyr-1179 and Tyr-1180 residues. May also be phosphorylated at Tyr-1175 and Tyr-1180 by mTORC2. Dephosphorylated by PTPRF and PTPN1. Dephosphorylated by PTPN2 and Ptprv; down-regulates insulin-induced signaling. S-nitrosylation at Cys-1073 by BLVRB inhibits the receptor tyrosine kinase, thereby inhibiting insulin signaling. In terms of processing, ubiquitinated by MARCHF1; leading to degradation thereby reducing surface INSR expression.

The protein resides in the cell membrane. It is found in the recycling endosome membrane. Its subcellular location is the late endosome. The protein localises to the lysosome. It carries out the reaction L-tyrosyl-[protein] + ATP = O-phospho-L-tyrosyl-[protein] + ADP + H(+). Activated in response to insulin. Autophosphorylation activates the kinase activity. PTPN1, PTPRE and PTPRF dephosphorylate important tyrosine residues, thereby reducing INSR activity. Inhibited by ENPP1. GRB10 and GRB14 inhibit the catalytic activity of the INSR, they block access of substrates to the activated receptor. SOCS1 and SOCS3 act as negative regulators of INSR activity, they bind to the activated INRS and interfere with the phosphorylation of INSR substrates. Interacts with PTPRF. Interacts with ATIC; ATIC together with PRKAA2/AMPK2 and HACD3/PTPLAD1 is proposed to be part of a signaling netwok regulating INSR autophosphorylation and endocytosis. Functionally, receptor tyrosine kinase which mediates the pleiotropic actions of insulin. Binding of insulin leads to phosphorylation of several intracellular substrates, including, insulin receptor substrates (IRS1, 2, 3, 4), SHC, GAB1, CBL and other signaling intermediates. Each of these phosphorylated proteins serve as docking proteins for other signaling proteins that contain Src-homology-2 domains (SH2 domain) that specifically recognize different phosphotyrosine residues, including the p85 regulatory subunit of PI3K and SHP2. Phosphorylation of IRSs proteins lead to the activation of two main signaling pathways: the PI3K-AKT/PKB pathway, which is responsible for most of the metabolic actions of insulin, and the Ras-MAPK pathway, which regulates expression of some genes and cooperates with the PI3K pathway to control cell growth and differentiation. Binding of the SH2 domains of PI3K to phosphotyrosines on IRS1 leads to the activation of PI3K and the generation of phosphatidylinositol-(3, 4, 5)-triphosphate (PIP3), a lipid second messenger, which activates several PIP3-dependent serine/threonine kinases, such as PDPK1 and subsequently AKT/PKB. The net effect of this pathway is to produce a translocation of the glucose transporter SLC2A4/GLUT4 from cytoplasmic vesicles to the cell membrane to facilitate glucose transport. Moreover, upon insulin stimulation, activated AKT/PKB is responsible for: anti-apoptotic effect of insulin by inducing phosphorylation of BAD; regulates the expression of gluconeogenic and lipogenic enzymes by controlling the activity of the winged helix or forkhead (FOX) class of transcription factors. Another pathway regulated by PI3K-AKT/PKB activation is mTORC1 signaling pathway which regulates cell growth and metabolism and integrates signals from insulin. AKT mediates insulin-stimulated protein synthesis by phosphorylating TSC2 thereby activating mTORC1 pathway. The Ras/RAF/MAP2K/MAPK pathway is mainly involved in mediating cell growth, survival and cellular differentiation of insulin. Phosphorylated IRS1 recruits GRB2/SOS complex, which triggers the activation of the Ras/RAF/MAP2K/MAPK pathway. In addition to binding insulin, the insulin receptor can bind insulin-like growth factors (IGFI and IGFII). When present in a hybrid receptor with IGF1R, binds IGF1. In adipocytes, inhibits lipolysis. The sequence is that of Insulin receptor (Insr) from Mus musculus (Mouse).